Reading from the N-terminus, the 571-residue chain is MAPSVATSLKAEILPSPRTSSPSSNFKTCVSNENGCINCRCSPSEPHESANVDESVNKLSKTFSKLSLNPTFQALNMDLGLLHENITLDRIPKVPENHVSLIDIDEARAKEDPNFQIHSTPSRMPPHYVQPHPPFSVFPAPILDVRELTKPGAVKRVFHFELDVSNYPLPEGEEWMVGGSFGVMAPNNEEDVDELLQLLHINPDQADAPVLLKTDGGRWPTIWAEDTPRELVTTRRELLKWTVEFMSVAPKKQLIRLLAEYAKDDTERQVLLFLVSRLGQRAFCDLRDHNVTLITLLKAFPSVQLPLDHLLTVLPQLMPRWYSLSNDPKVSNNVLEFAVTVVEINKVEGGTRSGIGSGFLKRLALRFLNGERDLVLPMYRGLHKNAFATHFASDGPMCLIGAGVGVAPFRGFVQRRLTNATCAGKVWVFHGCRDQELDELYHGEWENPLQKSSDDDASSTVSQQTETEMDSFEVKKDGTSGPNHLVVESRSHQHAYVQDEIRHRGDIVWSVLSHPHGKVYLCGGKKGFLDGVENALIDVCVQYGKMSRLEATQQLALWQSPLNLKYIKEIW.

A disordered region spans residues 1–25; that stretch reads MAPSVATSLKAEILPSPRTSSPSSN. The region spanning 135–389 is the FAD-binding FR-type domain; sequence FSVFPAPILD…RGLHKNAFAT (255 aa). Residues 447–479 form a disordered region; it reads NPLQKSSDDDASSTVSQQTETEMDSFEVKKDGT.

Belongs to the flavoprotein pyridine nucleotide cytochrome reductase family. FAD serves as cofactor.

This is an uncharacterized protein from Schizosaccharomyces pombe (strain 972 / ATCC 24843) (Fission yeast).